The following is a 185-amino-acid chain: Ribosomal RNA small subunit methyltransferase G (185 aa).

Residues glycine 59, phenylalanine 64, isoleucine 110–glutamine 111, and arginine 127 each bind S-adenosyl-L-methionine.

This sequence belongs to the methyltransferase superfamily. RNA methyltransferase RsmG family.

It localises to the cytoplasm. The catalysed reaction is guanosine(527) in 16S rRNA + S-adenosyl-L-methionine = N(7)-methylguanosine(527) in 16S rRNA + S-adenosyl-L-homocysteine. In terms of biological role, specifically methylates the N7 position of guanine in position 527 of 16S rRNA. The sequence is that of Ribosomal RNA small subunit methyltransferase G from Helicobacter hepaticus (strain ATCC 51449 / 3B1).